The primary structure comprises 497 residues: Protein nucleotidyltransferase YdiU (497 aa).

ATP-binding residues include Gly-88, Gly-90, Arg-91, Lys-110, Asp-122, Gly-123, Arg-173, and Arg-180. Catalysis depends on Asp-249, which acts as the Proton acceptor. 2 residues coordinate Mg(2+): Asn-250 and Asp-259. Asp-259 is a binding site for ATP.

It belongs to the SELO family. It depends on Mg(2+) as a cofactor. Mn(2+) serves as cofactor.

It carries out the reaction L-seryl-[protein] + ATP = 3-O-(5'-adenylyl)-L-seryl-[protein] + diphosphate. It catalyses the reaction L-threonyl-[protein] + ATP = 3-O-(5'-adenylyl)-L-threonyl-[protein] + diphosphate. The enzyme catalyses L-tyrosyl-[protein] + ATP = O-(5'-adenylyl)-L-tyrosyl-[protein] + diphosphate. The catalysed reaction is L-histidyl-[protein] + UTP = N(tele)-(5'-uridylyl)-L-histidyl-[protein] + diphosphate. It carries out the reaction L-seryl-[protein] + UTP = O-(5'-uridylyl)-L-seryl-[protein] + diphosphate. It catalyses the reaction L-tyrosyl-[protein] + UTP = O-(5'-uridylyl)-L-tyrosyl-[protein] + diphosphate. Functionally, nucleotidyltransferase involved in the post-translational modification of proteins. It can catalyze the addition of adenosine monophosphate (AMP) or uridine monophosphate (UMP) to a protein, resulting in modifications known as AMPylation and UMPylation. This is Protein nucleotidyltransferase YdiU from Methylorubrum extorquens (strain CM4 / NCIMB 13688) (Methylobacterium extorquens).